The following is a 377-amino-acid chain: UPF0754 membrane protein YheB (377 aa).

2 consecutive transmembrane segments (helical) span residues 1–21 (MGIA…GAVT) and 357–377 (YLGG…VILF).

This sequence belongs to the UPF0754 family.

The protein localises to the cell membrane. The protein is UPF0754 membrane protein YheB (yheB) of Bacillus subtilis (strain 168).